We begin with the raw amino-acid sequence, 345 residues long: Phenylalanine--tRNA ligase alpha subunit (345 aa).

Residue Glu-259 participates in Mg(2+) binding.

This sequence belongs to the class-II aminoacyl-tRNA synthetase family. Phe-tRNA synthetase alpha subunit type 1 subfamily. In terms of assembly, tetramer of two alpha and two beta subunits. Mg(2+) serves as cofactor.

The protein localises to the cytoplasm. The enzyme catalyses tRNA(Phe) + L-phenylalanine + ATP = L-phenylalanyl-tRNA(Phe) + AMP + diphosphate + H(+). The chain is Phenylalanine--tRNA ligase alpha subunit from Lactococcus lactis subsp. cremoris (strain MG1363).